A 360-amino-acid chain; its full sequence is Fructose-bisphosphate aldolase 1 (360 aa).

Ser-63 provides a ligand contact to D-glyceraldehyde 3-phosphate. The Proton donor role is filled by Asp-110. His-111, Asp-145, Glu-175, and His-227 together coordinate Zn(2+). Gly-228 is a dihydroxyacetone phosphate binding site. Residue His-266 coordinates Zn(2+). Position 267 to 269 (267 to 269) interacts with dihydroxyacetone phosphate; the sequence is GGS.

It belongs to the class II fructose-bisphosphate aldolase family. Homodimer. The cofactor is Zn(2+).

It carries out the reaction beta-D-fructose 1,6-bisphosphate = D-glyceraldehyde 3-phosphate + dihydroxyacetone phosphate. The protein operates within carbohydrate degradation; glycolysis; D-glyceraldehyde 3-phosphate and glycerone phosphate from D-glucose: step 4/4. Catalyzes the aldol condensation of dihydroxyacetone phosphate (DHAP or glycerone-phosphate) with glyceraldehyde 3-phosphate (G3P) to form fructose 1,6-bisphosphate (FBP) in gluconeogenesis and the reverse reaction in glycolysis. This chain is Fructose-bisphosphate aldolase 1 (FBA1), found in Paracoccidioides lutzii (strain ATCC MYA-826 / Pb01) (Paracoccidioides brasiliensis).